We begin with the raw amino-acid sequence, 442 residues long: Ribosomal protein uS12 methylthiotransferase RimO (442 aa).

Positions 5-117 (PSIGVVSLGC…VLDAIHAALP (113 aa)) constitute an MTTase N-terminal domain. C14, C50, C79, C148, C152, and C155 together coordinate [4Fe-4S] cluster. In terms of domain architecture, Radical SAM core spans 134 to 371 (LTPPHYAYLK…MAVQEAISRQ (238 aa)). One can recognise a TRAM domain in the interval 374–441 (QRRVGQRQRV…AHDLYGMVVS (68 aa)).

The protein belongs to the methylthiotransferase family. RimO subfamily. The cofactor is [4Fe-4S] cluster.

The protein resides in the cytoplasm. The enzyme catalyses L-aspartate(89)-[ribosomal protein uS12]-hydrogen + (sulfur carrier)-SH + AH2 + 2 S-adenosyl-L-methionine = 3-methylsulfanyl-L-aspartate(89)-[ribosomal protein uS12]-hydrogen + (sulfur carrier)-H + 5'-deoxyadenosine + L-methionine + A + S-adenosyl-L-homocysteine + 2 H(+). Its function is as follows. Catalyzes the methylthiolation of an aspartic acid residue of ribosomal protein uS12. This chain is Ribosomal protein uS12 methylthiotransferase RimO, found in Acidithiobacillus ferrooxidans (strain ATCC 53993 / BNL-5-31) (Leptospirillum ferrooxidans (ATCC 53993)).